We begin with the raw amino-acid sequence, 502 residues long: MADENPQAQGAEGGGKGKSSSMRLQERHQQLRKRGRTPPSAYARRDMNETAQQHNRNESSNRSPSPLAPPRSPSPDAQARKRKRPGGGARMGLVDRETLRRRQEERERSQQEEAMRFSQNRGVTDIVRHHYNAVPQRGREWRKTESKIKGLRSFNNWIKSTLIQKFSPDEEFVARSIGTKDWADETAPPPMEDKRLLVVDLGCGKGGDLGKWQLAPQPVDLYVGLDPAEVSIVQARERYNGMRTGRGPRGRRGPLFHAEFAPKDCFGEYLGDVPIVQQVGIDPNAGPGGSVMSSRWGGGGFDVVASMFTIHYAFESEEKARQMLRNVAGCLKKGGRFLGVCPNSDIISARVAEMNAKRKERETAAKKEEAEPEDGEVEEDDNKIEWGNSIYRVRFSGDTPEDGIFRPPFGWKYSYFMEEAVEEIPEYVVPWEAFRALTEDYNLELQYRKPFLEVWKDEKDDQELGPLSERMGVRDRNTGALLMTEEEKEAASFYHAFCFYKV.

Residues Met1–Ser118 form a disordered region. Basic and acidic residues predominate over residues Leu93–Met115. Positions Ser146–Val502 constitute an mRNA cap 0 methyltransferase domain. An mRNA-binding site is contributed by Asn155–Asn156. Residues Lys159, Gly202, Asp226, Asp264, Met307 to Thr309, and Tyr312 contribute to the S-adenosyl-L-methionine site. The span at Glu360–Glu369 shows a compositional bias: basic and acidic residues. The tract at residues Glu360–Asp381 is disordered. Acidic residues predominate over residues Ala370–Asp381.

It belongs to the class I-like SAM-binding methyltransferase superfamily. mRNA cap 0 methyltransferase family.

It localises to the nucleus. It carries out the reaction a 5'-end (5'-triphosphoguanosine)-ribonucleoside in mRNA + S-adenosyl-L-methionine = a 5'-end (N(7)-methyl 5'-triphosphoguanosine)-ribonucleoside in mRNA + S-adenosyl-L-homocysteine. Functionally, responsible for methylating the 5'-cap structure of mRNAs. This is mRNA cap guanine-N(7) methyltransferase (abd1) from Aspergillus oryzae (strain ATCC 42149 / RIB 40) (Yellow koji mold).